The following is a 581-amino-acid chain: DEAD-box ATP-dependent RNA helicase 22 (581 aa).

Residues 80 to 108 (VSWKSLGLSDNVSIALRDSGFDRPSLTQA) carry the Q motif motif. The Helicase ATP-binding domain maps to 111–380 (IPSILSGKDV…GGILKHMFQD (270 aa)). Residue 124–131 (AETGSGKT) participates in ATP binding. The short motif at 244–247 (DEAD) is the DEAD box element. In terms of domain architecture, Helicase C-terminal spans 408-566 (QVDALIEAVK…GFRNKVKKRA (159 aa)).

This sequence belongs to the DEAD box helicase family.

It carries out the reaction ATP + H2O = ADP + phosphate + H(+). This is DEAD-box ATP-dependent RNA helicase 22 (RH22) from Arabidopsis thaliana (Mouse-ear cress).